The chain runs to 326 residues: Cinnamoyl-CoA reductase CAD2 (326 aa).

Residues 14 to 20, Arg39, Lys46, 66 to 67, and 86 to 88 contribute to the NADP(+) site; these read GASGYIA, NL, and TAS. Positions 130, 136, 141, and 165 each coordinate (E)-coniferaldehyde. Residues Tyr165, Lys169, 192 to 195, and Ser207 contribute to the NADP(+) site; that span reads PAMV. Lys169 acts as the Proton donor in catalysis. Residues Met194, Ser207, Phe226, Val257, and Tyr290 each coordinate (E)-coniferaldehyde.

It belongs to the NAD(P)-dependent epimerase/dehydratase family. Dihydroflavonol-4-reductase subfamily.

The protein resides in the cytoplasm. The catalysed reaction is (E)-cinnamaldehyde + NADP(+) + CoA = (E)-cinnamoyl-CoA + NADPH + H(+). It catalyses the reaction (E)-coniferaldehyde + NADP(+) + CoA = (E)-feruloyl-CoA + NADPH + H(+). It carries out the reaction (E)-4-coumaraldehyde + NADP(+) + CoA = (E)-4-coumaroyl-CoA + NADPH + H(+). Its pathway is aromatic compound metabolism; phenylpropanoid biosynthesis. Its function is as follows. Involved in lignin biosynthesis. Regulates the monolignol composition by catalyzing the conversion of cinnamoyl-CoAs into their corresponding cinnamaldehydes. Can use coumaraldehyde and coniferaldehyde as substrates, but barely sinapaldehyde. The protein is Cinnamoyl-CoA reductase CAD2 of Medicago truncatula (Barrel medic).